Consider the following 161-residue polypeptide: Cyclic pyranopterin monophosphate synthase (161 aa).

Substrate-binding positions include 73–75 and 110–111; these read LCH and ME. The active site involves Asp125.

This sequence belongs to the MoaC family. As to quaternary structure, homohexamer; trimer of dimers.

The catalysed reaction is (8S)-3',8-cyclo-7,8-dihydroguanosine 5'-triphosphate = cyclic pyranopterin phosphate + diphosphate. Its pathway is cofactor biosynthesis; molybdopterin biosynthesis. In terms of biological role, catalyzes the conversion of (8S)-3',8-cyclo-7,8-dihydroguanosine 5'-triphosphate to cyclic pyranopterin monophosphate (cPMP). In Pseudomonas syringae pv. syringae (strain B728a), this protein is Cyclic pyranopterin monophosphate synthase.